The sequence spans 874 residues: Protein translocase subunit SecA (874 aa).

ATP is bound by residues glutamine 87, 105–109 (GEGKT), and aspartate 512. Residues cysteine 859, cysteine 861, cysteine 870, and histidine 871 each contribute to the Zn(2+) site.

This sequence belongs to the SecA family. Monomer and homodimer. Part of the essential Sec protein translocation apparatus which comprises SecA, SecYEG and auxiliary proteins SecDF-YajC and YidC. The cofactor is Zn(2+).

The protein resides in the cell inner membrane. It is found in the cytoplasm. The catalysed reaction is ATP + H2O + cellular proteinSide 1 = ADP + phosphate + cellular proteinSide 2.. Part of the Sec protein translocase complex. Interacts with the SecYEG preprotein conducting channel. Has a central role in coupling the hydrolysis of ATP to the transfer of proteins into and across the cell membrane, serving both as a receptor for the preprotein-SecB complex and as an ATP-driven molecular motor driving the stepwise translocation of polypeptide chains across the membrane. In Buchnera aphidicola subsp. Schizaphis graminum (strain Sg), this protein is Protein translocase subunit SecA.